We begin with the raw amino-acid sequence, 233 residues long: Protein-L-isoaspartate O-methyltransferase (233 aa).

The active site involves Ser-83.

The protein belongs to the methyltransferase superfamily. L-isoaspartyl/D-aspartyl protein methyltransferase family.

The protein resides in the cytoplasm. It carries out the reaction [protein]-L-isoaspartate + S-adenosyl-L-methionine = [protein]-L-isoaspartate alpha-methyl ester + S-adenosyl-L-homocysteine. Functionally, catalyzes the methyl esterification of L-isoaspartyl residues in peptides and proteins that result from spontaneous decomposition of normal L-aspartyl and L-asparaginyl residues. It plays a role in the repair and/or degradation of damaged proteins. The polypeptide is Protein-L-isoaspartate O-methyltransferase (Opitutus terrae (strain DSM 11246 / JCM 15787 / PB90-1)).